The sequence spans 261 residues: Putative phosphite transport system permease protein HtxE (261 aa).

One can recognise an ABC transmembrane type-1 domain in the interval 47–253; that stretch reads EATTETVEVL…VFVFVLDQLQ (207 aa). 3 consecutive transmembrane segments (helical) span residues 122 to 142, 203 to 220, and 229 to 249; these read LIVALFLVLAYGFGPIAGVLA, RNLRMATVIGLVGAGGIG, and MFQYGHVMTILIAIFVFVFVL.

Belongs to the binding-protein-dependent transport system permease family.

It is found in the cell inner membrane. Probably forms part of a binding-protein-dependent hypophosphite transporter. In Stutzerimonas stutzeri (Pseudomonas stutzeri), this protein is Putative phosphite transport system permease protein HtxE (htxE).